Reading from the N-terminus, the 396-residue chain is Elongation factor Tu (396 aa).

Residues 10 to 206 (KPHVNVGTIG…TLDEYIPEPE (197 aa)) form the tr-type G domain. Positions 19 to 26 (GHVDHGKT) are G1. 19 to 26 (GHVDHGKT) provides a ligand contact to GTP. T26 is a Mg(2+) binding site. Residues 60–64 (GITIA) form a G2 region. Positions 81–84 (DCPG) are G3. GTP contacts are provided by residues 81–85 (DCPGH) and 136–139 (NKAD). The tract at residues 136–139 (NKAD) is G4. The G5 stretch occupies residues 174 to 176 (SAL).

The protein belongs to the TRAFAC class translation factor GTPase superfamily. Classic translation factor GTPase family. EF-Tu/EF-1A subfamily. As to quaternary structure, monomer.

It localises to the cytoplasm. It catalyses the reaction GTP + H2O = GDP + phosphate + H(+). Its function is as follows. GTP hydrolase that promotes the GTP-dependent binding of aminoacyl-tRNA to the A-site of ribosomes during protein biosynthesis. The sequence is that of Elongation factor Tu from Alcanivorax borkumensis (strain ATCC 700651 / DSM 11573 / NCIMB 13689 / SK2).